The primary structure comprises 250 residues: Adenosine 5'-phosphosulfate reductase (250 aa).

Cysteine 119, cysteine 120, cysteine 202, and cysteine 205 together coordinate [4Fe-4S] cluster. Residue cysteine 230 is the Nucleophile; cysteine thiosulfonate intermediate of the active site.

The protein belongs to the PAPS reductase family. CysH subfamily. It depends on [4Fe-4S] cluster as a cofactor.

The protein localises to the cytoplasm. The catalysed reaction is [thioredoxin]-disulfide + sulfite + AMP + 2 H(+) = adenosine 5'-phosphosulfate + [thioredoxin]-dithiol. It functions in the pathway sulfur metabolism; hydrogen sulfide biosynthesis; sulfite from sulfate. Functionally, catalyzes the formation of sulfite from adenosine 5'-phosphosulfate (APS) using thioredoxin as an electron donor. This chain is Adenosine 5'-phosphosulfate reductase, found in Burkholderia cepacia (Pseudomonas cepacia).